The primary structure comprises 357 residues: MQAIISTAPGQAALVHDRPLPTIRDGYLLVKTKAVALNPTDWKHIEVTQKPGILFGCDYAGIVEQVGPGVQSGFQPGDRVAGFVHGGNSKEPQDGAFAEYIVAKADLQIHIPEHMSFEEAATLGVGITAVGQGLYQTLSLPFPSPSSIHEDGAEKPANPATQPILIYGASTASGVLGIQFAKLSGFAPLAVCSPDHFDLAERLGAVAVFDYADGEDAVEEIQDYVRGMGQPLLKAWDTISIPSSARFCGDALSSGNGPQYASLLSMTCPRPDVTSTTTMAYTVFGEDWGMGTAHFPASGVDAELGRRWWALVQQLLNEGRIQTHRIIAGEGGLDGVLGGLQQLRDSQVRGGKLVFRV.

An NADP(+)-binding site is contributed by tyrosine 211.

It belongs to the zinc-containing alcohol dehydrogenase family.

Its pathway is antifungal biosynthesis. Its function is as follows. Trans-enoyl reductase; part of the gene cluster that mediates the biosynthesis of the tetrahydropyranyl antifungal agent restricticin that acts as an inhibitor of CYP51 and blocks the ergosterol biosynthesis. The highly reducing polyketide synthase resH, the short chain dehydrogenase resG, the cyclase resF, the FAD-dependent monooxygenase resA and the enoylreductase resD are required to generate the first stable intermediate desmethylrestrictinol. ResH with resD biosynthesize the first polyketide chain intermediate that is reduced by resG, followed by epoxidation by resA before 6-endo cyclization via epoxide opening by resF leads to desmethylrestrictinol. The methyltransferase resE then catalyzes the C4 O-methylation of desmethylrestrictinol to produce restrictinol, and the nonribosomal peptide synthetase resC catalyzes the C3 esterification of restrictinol with glycine that leads to restricticin. This chain is Trans-enoyl reductase resD, found in Aspergillus sclerotiorum.